Reading from the N-terminus, the 465-residue chain is Ribulose bisphosphate carboxylase large chain (465 aa).

Residue lysine 4 is modified to N6,N6,N6-trimethyllysine. Substrate contacts are provided by asparagine 113 and threonine 163. Lysine 165 acts as the Proton acceptor in catalysis. Lysine 167 is a substrate binding site. Residues lysine 191, aspartate 193, and glutamate 194 each coordinate Mg(2+). Position 191 is an N6-carboxylysine (lysine 191). Residue histidine 284 is the Proton acceptor of the active site. Residues arginine 285, histidine 317, and serine 369 each contribute to the substrate site.

This sequence belongs to the RuBisCO large chain family. Type I subfamily. As to quaternary structure, heterohexadecamer of 8 large chains and 8 small chains. Mg(2+) serves as cofactor.

It localises to the plastid. The protein localises to the chloroplast. The enzyme catalyses 2 (2R)-3-phosphoglycerate + 2 H(+) = D-ribulose 1,5-bisphosphate + CO2 + H2O. It carries out the reaction D-ribulose 1,5-bisphosphate + O2 = 2-phosphoglycolate + (2R)-3-phosphoglycerate + 2 H(+). Functionally, ruBisCO catalyzes two reactions: the carboxylation of D-ribulose 1,5-bisphosphate, the primary event in carbon dioxide fixation, as well as the oxidative fragmentation of the pentose substrate in the photorespiration process. Both reactions occur simultaneously and in competition at the same active site. The protein is Ribulose bisphosphate carboxylase large chain of Sarracenia flava (Yellow pitcher plant).